The sequence spans 406 residues: Elongation factor Tu (406 aa).

In terms of domain architecture, tr-type G spans 10 to 215; that stretch reads KPHVNVGTIG…AIDEYIPTPV (206 aa). The segment at 19 to 26 is G1; the sequence is GHVDHGKT. 19 to 26 lines the GTP pocket; the sequence is GHVDHGKT. Thr26 contributes to the Mg(2+) binding site. Residues 61 to 65 are G2; sequence GITIN. Residues 82–85 form a G3 region; the sequence is DCPG. Residues 82-86 and 137-140 each bind GTP; these read DCPGH and NKVD. The interval 137 to 140 is G4; sequence NKVD. Positions 175 to 177 are G5; the sequence is SAL.

It belongs to the TRAFAC class translation factor GTPase superfamily. Classic translation factor GTPase family. EF-Tu/EF-1A subfamily. In terms of assembly, monomer.

The protein localises to the cytoplasm. The catalysed reaction is GTP + H2O = GDP + phosphate + H(+). GTP hydrolase that promotes the GTP-dependent binding of aminoacyl-tRNA to the A-site of ribosomes during protein biosynthesis. The polypeptide is Elongation factor Tu (Thermus thermophilus (strain ATCC BAA-163 / DSM 7039 / HB27)).